A 565-amino-acid chain; its full sequence is Probable serine/threonine-protein kinase abkA (565 aa).

Positions 44–77 (NNNNISLKDKFKDLKDLKDNLNEKKINNDNDDDD) form a coiled coil. Positions 231–565 (LFQDDPIAAA…FKNIFYKNYK (335 aa)) constitute a Protein kinase domain. ATP-binding positions include 237 to 245 (IAAASIGQV) and Lys-259. The Proton acceptor role is filled by Asp-401.

This sequence belongs to the protein kinase superfamily. ADCK protein kinase family.

The sequence is that of Probable serine/threonine-protein kinase abkA (abkA) from Dictyostelium discoideum (Social amoeba).